A 79-amino-acid chain; its full sequence is Sec-independent protein translocase protein TatA (79 aa).

The helical transmembrane segment at 1–21 (MGGFTSIWHWVIVLLVIVLLF) threads the bilayer. A disordered region spans residues 48–79 (EEEAKNEPKTLDAQATQTKVHESSEIKSKQES). Basic and acidic residues predominate over residues 66-79 (KVHESSEIKSKQES).

This sequence belongs to the TatA/E family. In terms of assembly, the Tat system comprises two distinct complexes: a TatABC complex, containing multiple copies of TatA, TatB and TatC subunits, and a separate TatA complex, containing only TatA subunits. Substrates initially bind to the TatABC complex, which probably triggers association of the separate TatA complex to form the active translocon.

The protein resides in the cell inner membrane. Functionally, part of the twin-arginine translocation (Tat) system that transports large folded proteins containing a characteristic twin-arginine motif in their signal peptide across membranes. TatA could form the protein-conducting channel of the Tat system. The chain is Sec-independent protein translocase protein TatA from Helicobacter pylori (strain ATCC 700392 / 26695) (Campylobacter pylori).